The primary structure comprises 1419 residues: Agglutinin-like protein 5 (1419 aa).

A signal peptide spans 1 to 17 (MIQQFTLLFLYLSFATA). 4 disulfides stabilise this stretch: C73/C150, C96/C112, C205/C298, and C227/C256. ALS repeat units lie at residues 365 to 396 (TTITTSYVGVTTSYSTKTAPIGETATVIVDVP), 401 to 432 (TTVTSEWTGTITTTTTRTNPTDSIDTVVVQVP), 438 to 469 (TTTTQFWSESFTSTTTITNSLKGTDSVIVREP), 474 to 505 (VTTTEFWSESFATTETITSKPEGTDSVIVREP), 510 to 541 (VTTTEFWSESYATTETITNGPEGTDSVIVREP), 546 to 577 (VTTTKFWSESYATTETITNKPEGTDSVIVKEP), 582 to 613 (VTTTEFWSESYATTETITNGPEGTDSVIVREP), and 618 to 649 (VTTTEFWSESYATTETITTGPLGTDSIVIHDP). 2 disordered regions span residues 652 to 752 (ESSS…SSSS) and 864 to 885 (ASSFDSSSSLNSDSSSSPSSDQ). Residue N665 is glycosylated (N-linked (GlcNAc...) asparagine). N919 is a glycosylation site (N-linked (GlcNAc...) asparagine). Disordered regions lie at residues 926–966 (SESE…DSST), 981–1035 (TGMP…TKSS), 1051–1093 (TSTL…KESS), 1134–1177 (EDNE…TTDV), and 1211–1252 (ATSL…NRLS). 3 stretches are compositionally biased toward low complexity: residues 928 to 942 (SESSSVASPSMASES), 951 to 966 (SESTDTTSSIGTDSST), and 993 to 1011 (TSDVTTTSSFVASSTPTSA). Polar residues predominate over residues 1012-1022 (EQSITDNPNID). 2 stretches are compositionally biased toward low complexity: residues 1023–1035 (SSQTSASSSTKSS) and 1051–1078 (TSTLSSDDSTSSDTSISSTTNSDTGNIN). Composition is skewed to polar residues over residues 1079-1093 (AGSSHTSTASIKESS) and 1138-1160 (PNTFTSTPSSHSEIFSSDNSVLS). The span at 1212-1230 (TSLRSTSSSSNHATESSGT) shows a compositional bias: low complexity. N1301 and N1326 each carry an N-linked (GlcNAc...) asparagine glycan. S1398 carries the GPI-anchor amidated serine lipid modification. The propeptide at 1399–1419 (SATKHPSWLLKFISVALFFFL) is removed in mature form.

The protein belongs to the ALS family. Forms homodimers through the tandem repeats. Aggregates in amyloid-like structures, with self-propagating secondary-structure changes, amyloid-characteristic dye binding, and induced birefringence. N-glycosylated and O-glycosylated. In terms of processing, the GPI-anchor is attached to the protein in the endoplasmic reticulum and serves to target the protein to the cell surface. There, the glucosamine-inositol phospholipid moiety is cleaved off and the GPI-modified mannoprotein is covalently attached via its lipidless GPI glycan remnant to the 1,6-beta-glucan of the outer cell wall layer.

The protein resides in the cell membrane. Its subcellular location is the secreted. It localises to the cell wall. Cell surface adhesion protein which mediates both yeast-to-host tissue adherence and yeast aggregation. Plays an important role in the pathogenesis of C.albicans infections. Forms amyloid structures, essential for cell-cell association and cell-substrate adhesion to polystyrene. This is Agglutinin-like protein 5 (ALS5) from Candida albicans (Yeast).